The chain runs to 61 residues: Large ribosomal subunit protein bL32 (61 aa).

Basic residues predominate over residues 1–16 (MAVPKRKTSPSKRGMR). The interval 1–61 (MAVPKRKTSP…RSVLTPKNSG (61 aa)) is disordered. A compositionally biased stretch (basic and acidic residues) spans 28–44 (VEDKDSGELRRPHHIDL).

Belongs to the bacterial ribosomal protein bL32 family.

This chain is Large ribosomal subunit protein bL32, found in Bartonella bacilliformis (strain ATCC 35685 / KC583 / Herrer 020/F12,63).